We begin with the raw amino-acid sequence, 371 residues long: uncharacterized protein (371 aa).

Residues Glu-287–Met-323 are a coiled coil.

This is an uncharacterized protein from Aspergillus fumigatus (strain ATCC MYA-4609 / CBS 101355 / FGSC A1100 / Af293) (Neosartorya fumigata).